We begin with the raw amino-acid sequence, 459 residues long: Putrescine aminotransferase (459 aa).

Pyridoxal 5'-phosphate contacts are provided by residues 150–151 (GT) and Gln-274. Lys-300 is subject to N6-(pyridoxal phosphate)lysine. A pyridoxal 5'-phosphate-binding site is contributed by Thr-332.

It belongs to the class-III pyridoxal-phosphate-dependent aminotransferase family. Putrescine aminotransferase subfamily. It depends on pyridoxal 5'-phosphate as a cofactor.

The catalysed reaction is an alkane-alpha,omega-diamine + 2-oxoglutarate = an omega-aminoaldehyde + L-glutamate. It catalyses the reaction putrescine + 2-oxoglutarate = 1-pyrroline + L-glutamate + H2O. The enzyme catalyses cadaverine + 2-oxoglutarate = 5-aminopentanal + L-glutamate. Its pathway is amine and polyamine degradation; putrescine degradation; 4-aminobutanal from putrescine (transaminase route): step 1/1. Functionally, catalyzes the aminotransferase reaction from putrescine to 2-oxoglutarate, leading to glutamate and 4-aminobutanal, which spontaneously cyclizes to form 1-pyrroline. This is the first step in one of two pathways for putrescine degradation, where putrescine is converted into 4-aminobutanoate (gamma-aminobutyrate or GABA) via 4-aminobutanal. Also functions as a cadaverine transaminase in a a L-lysine degradation pathway to succinate that proceeds via cadaverine, glutarate and L-2-hydroxyglutarate. This is Putrescine aminotransferase from Escherichia coli (strain ATCC 8739 / DSM 1576 / NBRC 3972 / NCIMB 8545 / WDCM 00012 / Crooks).